The sequence spans 164 residues: Putative pre-16S rRNA nuclease (164 aa).

The protein belongs to the YqgF nuclease family.

Its subcellular location is the cytoplasm. Its function is as follows. Could be a nuclease involved in processing of the 5'-end of pre-16S rRNA. The polypeptide is Putative pre-16S rRNA nuclease (Rhizobium etli (strain CIAT 652)).